The primary structure comprises 317 residues: Olfactory receptor 10A5 (317 aa).

Residues 1-26 are Extracellular-facing; that stretch reads MAIGNWTEISEFILMSFSSLPTEIQS. An N-linked (GlcNAc...) asparagine glycan is attached at Asn5. Residues 27 to 47 form a helical membrane-spanning segment; it reads LLFLTFLTIYLVTLKGNSLII. The Cytoplasmic segment spans residues 48 to 55; the sequence is LVTLADPM. A helical membrane pass occupies residues 56–76; it reads LHSPMYFFLRNLSFLEIGFNL. Residues 77–100 are Extracellular-facing; sequence VIVPKMLGTLLAQDTTISFLGCAT. Cys98 and Cys190 are disulfide-bonded. Residues 101–121 traverse the membrane as a helical segment; it reads QMYFFFFFGVAECFLLATMAY. The Cytoplasmic segment spans residues 122–140; that stretch reads DRYVAICSPLHYPVIMNQR. The chain crosses the membrane as a helical span at residues 141–161; sequence TRAKLAAASWFPGFPVATVQT. Topologically, residues 162–198 are extracellular; that stretch reads TWLFSFPFCGTNKVNHFFCDSPPVLKLVCADTALFEI. Residues 199–218 form a helical membrane-spanning segment; sequence YAIVGTILVVMIPCLLILCS. Over 219–238 the chain is Cytoplasmic; that stretch reads YTRIAAAILKIPSAKGKHKA. The helical transmembrane segment at 239–259 threads the bilayer; the sequence is FSTCSSHLLVVSLFYISSSLT. Residues 260–272 are Extracellular-facing; the sequence is YFWPKSNNSPESK. Residues 273 to 293 traverse the membrane as a helical segment; that stretch reads KLLSLSYTVVTPMLNPIIYSL. The Cytoplasmic segment spans residues 294 to 317; that stretch reads RNSEVKNALSRTFHKVLALRNCIP.

The protein belongs to the G-protein coupled receptor 1 family. In terms of tissue distribution, expressed in the tongue.

It localises to the cell membrane. In terms of biological role, odorant receptor (Potential). May be involved in taste perception. This chain is Olfactory receptor 10A5 (OR10A5), found in Homo sapiens (Human).